Consider the following 379-residue polypeptide: MRVLAAMSGGVDSAVAAARAVEAGHDVVGVHLALSRMPGTLRTGSRGCCTIEDSRDAWRACDVLGIPYYVWDFSERFKEDVVQDFIDEYAAGRTPNPCMRCNERIKFAALLEKAIALGFDAVCTGHYAKVIEDADGNRELHRAADWAKDQSYVLGVLTHEQLKHSMFPLADTPSKAEVRAEAERRGLSVANKPDSHDICFISDGDTRGWLAEKIDMTTGDIVDETGAKVGEHPGANAFTVGQRRGLKLGTPAADGKPRFVLEIRPKENKVVVGPEALLAIDEIRGIKVSWAGLPISEVATGAEFDCHAQVRAHGDPVPAIARVEAVTDESGVERAQLVVTLTDPLRGVAPGQTVVLYQGSRVLGQATIDAARSLQRQVL.

ATP contacts are provided by residues 6-13 (AMSGGVDS) and Leu-32. Cys-101 serves as the catalytic Nucleophile. An intrachain disulfide couples Cys-101 to Cys-199. Gly-125 is a binding site for ATP. The interval 148–150 (KDQ) is interaction with tRNA. Residue Cys-199 is the Cysteine persulfide intermediate of the active site.

Belongs to the MnmA/TRMU family.

The protein resides in the cytoplasm. The enzyme catalyses S-sulfanyl-L-cysteinyl-[protein] + uridine(34) in tRNA + AH2 + ATP = 2-thiouridine(34) in tRNA + L-cysteinyl-[protein] + A + AMP + diphosphate + H(+). In terms of biological role, catalyzes the 2-thiolation of uridine at the wobble position (U34) of tRNA, leading to the formation of s(2)U34. The polypeptide is tRNA-specific 2-thiouridylase MnmA (Paenarthrobacter aurescens (strain TC1)).